The primary structure comprises 304 residues: Kazal-type serine protease inhibitor domain-containing protein 1 (304 aa).

An N-terminal signal peptide occupies residues 1–30; it reads MLPPPRPAAALALPVLLLLLVVLTPPPTGA. The IGFBP N-terminal domain occupies 49-129; it reads EGEGCAPCRP…EVPEPLCACR (81 aa). Disulfide bonds link Cys53–Cys76, Cys56–Cys78, Cys61–Cys79, Cys67–Cys82, Cys90–Cys108, Cys102–Cys126, and Cys135–Cys168. Positions 120-170 constitute a Kazal-like domain; it reads EVPEPLCACRSQSPLCGSDGHTYSQICRLQEAARARPDANLTVAHPGPCES. Residues Asn159 and Asn183 are each glycosylated (N-linked (GlcNAc...) asparagine). Residues 172–269 form the Ig-like C2-type domain; it reads PQIVSHPYDT…GQVEAPASLT (98 aa). Cys193 and Cys253 are oxidised to a cystine. Residue Asn277 is glycosylated (N-linked (GlcNAc...) asparagine).

The protein resides in the secreted. It is found in the extracellular space. It localises to the extracellular matrix. Its function is as follows. Involved in the proliferation of osteoblasts during bone formation and bone regeneration. Promotes matrix assembly. This is Kazal-type serine protease inhibitor domain-containing protein 1 (KAZALD1) from Homo sapiens (Human).